Consider the following 256-residue polypeptide: PHD finger protein ALFIN-LIKE 6 (256 aa).

The disordered stretch occupies residues 144–200; that stretch reads SKDLSVNNNNSKSKPSGVKSRQSESLSKVAKMSSPPPKEEEEEEDESEDESEDDEQG. A compositionally biased stretch (low complexity) spans 146–163; the sequence is DLSVNNNNSKSKPSGVKS. Residues 182 to 199 are compositionally biased toward acidic residues; that stretch reads EEEEEEDESEDESEDDEQ. The PHD-type zinc finger occupies 200-252; the sequence is GAVCGACGDNYGTDEFWICCDACEKWFHGKCVKITPAKAEHIKHYKCPTCSNK.

This sequence belongs to the Alfin family. As to quaternary structure, interacts with H3K4me3 and to a lesser extent with H3K4me2. In terms of tissue distribution, ubiquitously expressed.

The protein resides in the nucleus. Its function is as follows. Histone-binding component that specifically recognizes H3 tails trimethylated on 'Lys-4' (H3K4me3), which mark transcription start sites of virtually all active genes. This Arabidopsis thaliana (Mouse-ear cress) protein is PHD finger protein ALFIN-LIKE 6 (AL6).